The sequence spans 95 residues: Large ribosomal subunit protein bL21 (95 aa).

The protein belongs to the bacterial ribosomal protein bL21 family. Part of the 50S ribosomal subunit. Contacts protein L20.

In terms of biological role, this protein binds to 23S rRNA in the presence of protein L20. In Prosthecochloris vibrioformis (Chlorobium vibrioforme), this protein is Large ribosomal subunit protein bL21.